The following is a 1288-amino-acid chain: Peroxidasin homolog (1288 aa).

Residues 1–16 (MNLLLYLLLLVPWVLG) form the signal peptide. In terms of domain architecture, LRRNT spans 17 to 51 (SEDGCPAKCTCDKKGFTVDCSNAGLTRIPKGISSN). 7 LRR repeats span residues 27 to 49 (CDKK…KGIS), 50 to 72 (SNVR…DLEG), 73 to 96 (FPLL…ILDH), 97 to 120 (LPEL…ASES), 122 to 143 (PLAS…WLLQ), 145 to 168 (FPEL…LFEN), and 204 to 227 (AYCT…LLKC). Residues 180–228 (NPWNCDCRVTKVKALLRKVEWERKAYCTNPVELRHQAIDEVEESLLKCA) enclose the LRRCT domain. Asn-247 is a glycosylation site (N-linked (GlcNAc...) asparagine). The segment at 304-323 (LRQSHHSNGAPQFTYKPRDN) is disordered. Ig-like C2-type domains are found at residues 314–400 (PQFT…FSLD) and 407–494 (PNIY…AKLT). The cysteines at positions 335 and 384 are disulfide-linked. LRR repeat units lie at residues 356–381 (SSRK…DSGR) and 387–412 (VNSL…IYEG). A disulfide bridge connects residues Cys-428 and Cys-478. N-linked (GlcNAc...) asparagine glycosylation is present at Asn-594. Cys-624 and Cys-640 form a disulfide bridge. Heme b is bound at residue Asp-718. His-719 serves as the catalytic Proton acceptor. Ca(2+) is bound at residue Asp-720. 2 disulfides stabilise this stretch: Cys-739/Cys-749 and Cys-743/Cys-770. A glycan (N-linked (GlcNAc...) asparagine) is linked at Asn-740. Positions 802, 804, 806, and 808 each coordinate Ca(2+). N-linked (GlcNAc...) asparagine glycosylation occurs at Asn-857. Heme b is bound by residues Glu-876 and His-972. 2 LRR repeats span residues 998-1022 (KAFF…LFAS) and 1049-1073 (SLDL…EYRQ). Intrachain disulfides connect Cys-1075–Cys-1132 and Cys-1173–Cys-1200. Residues 1168-1189 (LARLLCDNGDEIDRIQKDVFMY) form an LRR 12 repeat.

It belongs to the peroxidase family. XPO subfamily. It depends on Ca(2+) as a cofactor. The cofactor is heme b.

The protein localises to the secreted. The protein resides in the extracellular space. Its subcellular location is the extracellular matrix. It catalyses the reaction L-lysyl-[collagen] + L-methionyl-[collagen] + H2O2 = [collagen]-L-lysyl-N-S-L-methionyl-[collagen] + 2 H2O + H(+). It carries out the reaction bromide + H2O2 = hypobromite + H2O. The enzyme catalyses L-lysyl-[collagen] + L-methionyl-[collagen] + hypobromite = [collagen]-L-lysyl-N-S-L-methionyl-[collagen] + bromide + H2O + H(+). The catalysed reaction is L-tyrosyl-[protein] + bromide + H2O2 + H(+) = 3-bromo-L-tyrosyl-[protein] + 2 H2O. It catalyses the reaction hypobromite + L-tyrosyl-[protein] + H(+) = 3-bromo-L-tyrosyl-[protein] + H2O. Functionally, catalyzes the two-electron oxidation of bromide by hydrogen peroxide and generates hypobromite as a reactive intermediate which mediates the formation of sulfilimine cross-links between methionine and hydroxylysine residues within an uncross-linked collagen IV NC1 hexamer. Plays a role in the attachment of tissues and in axonal guidance during early developmental stages. May functionally antagonize the peroxidasin pxn-2 to maintain neuronal development. The sequence is that of Peroxidasin homolog from Caenorhabditis briggsae.